We begin with the raw amino-acid sequence, 498 residues long: Acetyl-coenzyme A carboxylase carboxyl transferase subunit beta, chloroplastic (498 aa).

A CoA carboxyltransferase N-terminal domain is found at 228-498 (LWVQCEICYG…LNHNLSRTLT (271 aa)). Residues cysteine 232, cysteine 235, cysteine 251, and cysteine 254 each contribute to the Zn(2+) site. Residues 232-254 (CEICYGLNYKKFFKSKMNICEQC) form a C4-type zinc finger.

It belongs to the AccD/PCCB family. Acetyl-CoA carboxylase is a heterohexamer composed of biotin carboxyl carrier protein, biotin carboxylase and 2 subunits each of ACCase subunit alpha and ACCase plastid-coded subunit beta (accD). Requires Zn(2+) as cofactor.

The protein resides in the plastid. It localises to the chloroplast stroma. It catalyses the reaction N(6)-carboxybiotinyl-L-lysyl-[protein] + acetyl-CoA = N(6)-biotinyl-L-lysyl-[protein] + malonyl-CoA. It participates in lipid metabolism; malonyl-CoA biosynthesis; malonyl-CoA from acetyl-CoA: step 1/1. In terms of biological role, component of the acetyl coenzyme A carboxylase (ACC) complex. Biotin carboxylase (BC) catalyzes the carboxylation of biotin on its carrier protein (BCCP) and then the CO(2) group is transferred by the transcarboxylase to acetyl-CoA to form malonyl-CoA. The protein is Acetyl-coenzyme A carboxylase carboxyl transferase subunit beta, chloroplastic of Populus trichocarpa (Western balsam poplar).